We begin with the raw amino-acid sequence, 383 residues long: Acetylornithine deacetylase (383 aa).

His80 is a Zn(2+) binding site. Asp82 is an active-site residue. Residue Asp112 participates in Zn(2+) binding. Residue Glu144 is part of the active site. Zn(2+) is bound by residues Glu145, Glu169, and His355.

Belongs to the peptidase M20A family. ArgE subfamily. Homodimer. Zn(2+) is required as a cofactor. Co(2+) serves as cofactor. The cofactor is glutathione.

Its subcellular location is the cytoplasm. It catalyses the reaction N(2)-acetyl-L-ornithine + H2O = L-ornithine + acetate. The protein operates within amino-acid biosynthesis; L-arginine biosynthesis; L-ornithine from N(2)-acetyl-L-ornithine (linear): step 1/1. Catalyzes the hydrolysis of the amide bond of N(2)-acetylated L-amino acids. Cleaves the acetyl group from N-acetyl-L-ornithine to form L-ornithine, an intermediate in L-arginine biosynthesis pathway, and a branchpoint in the synthesis of polyamines. The chain is Acetylornithine deacetylase from Salmonella typhi.